We begin with the raw amino-acid sequence, 416 residues long: Serine hydroxymethyltransferase (416 aa).

(6S)-5,6,7,8-tetrahydrofolate-binding positions include leucine 120 and 124-126; that span reads GHL. Position 230 is an N6-(pyridoxal phosphate)lysine (lysine 230). Glutamate 246 provides a ligand contact to (6S)-5,6,7,8-tetrahydrofolate.

Belongs to the SHMT family. As to quaternary structure, homodimer. Requires pyridoxal 5'-phosphate as cofactor.

The protein localises to the cytoplasm. It carries out the reaction (6R)-5,10-methylene-5,6,7,8-tetrahydrofolate + glycine + H2O = (6S)-5,6,7,8-tetrahydrofolate + L-serine. Its pathway is one-carbon metabolism; tetrahydrofolate interconversion. The protein operates within amino-acid biosynthesis; glycine biosynthesis; glycine from L-serine: step 1/1. Catalyzes the reversible interconversion of serine and glycine with tetrahydrofolate (THF) serving as the one-carbon carrier. This reaction serves as the major source of one-carbon groups required for the biosynthesis of purines, thymidylate, methionine, and other important biomolecules. Also exhibits THF-independent aldolase activity toward beta-hydroxyamino acids, producing glycine and aldehydes, via a retro-aldol mechanism. This Onion yellows phytoplasma (strain OY-M) protein is Serine hydroxymethyltransferase.